Here is a 192-residue protein sequence, read N- to C-terminus: Probable apo-citrate lyase phosphoribosyl-dephospho-CoA transferase (192 aa).

It belongs to the CitX family.

The catalysed reaction is apo-[citrate lyase ACP] + 2'-(5''-triphospho-alpha-D-ribosyl)-3'-dephospho-CoA = holo-[citrate lyase ACP] + diphosphate. Transfers 2-(5''-triphosphoribosyl)-3'-dephosphocoenzyme-A on a serine residue to the apo-acyl carrier protein (gamma chain) of the citrate lyase to yield holo-acyl carrier protein. This Streptococcus pyogenes serotype M6 (strain ATCC BAA-946 / MGAS10394) protein is Probable apo-citrate lyase phosphoribosyl-dephospho-CoA transferase.